The primary structure comprises 288 residues: Ankyrin repeat and SOCS box protein 8 (288 aa).

The residue at position 17 (Ser-17) is a Phosphoserine. ANK repeat units lie at residues 52-81 (GTLK…EVNA), 85-113 (YNRT…NPNA), 117-146 (NRDT…SVNA), and 150-179 (NNDT…EVRV). Residues 235 to 288 (QLCEKLTVLCSAPGTLKTLARYAVRRSLGLQYLPDAVKGLPLPASLKEYLLLLE) form the SOCS box domain.

Belongs to the ankyrin SOCS box (ASB) family. Interacts with TBK1; this interaction promotes TBK1 proteasomal degradation. In terms of processing, phosphorylated by TBK1.

It is found in the cytoplasm. The protein operates within protein modification; protein ubiquitination. In terms of biological role, may be a substrate-recognition component of a SCF-like ECS (Elongin-Cullin-SOCS-box protein) E3 ubiquitin-protein ligase complex which mediates the ubiquitination and subsequent proteasomal degradation of target proteins. Inhibits IFN-beta production through the IRF3 signaling pathway by targeting TBK1 via 'Lys-48'-linked ubiquitination, leading to its proteasomal degradation. This chain is Ankyrin repeat and SOCS box protein 8 (ASB8), found in Macaca fascicularis (Crab-eating macaque).